A 523-amino-acid chain; its full sequence is MGVWYAIGSIIFGLLVGVSVYLISRKIFHSNSQIIIEQAKAKAKAIEYEAQNILQKHHMQIKEEQMRLKQEYEQECATLHKNYESRLAKLDKEESNRYQQLNNQKQEVEKEKQEIAELKVRLLRSQGEQDKLKQEYQHIKKEMLDVLSKYAQMTREEATNILLSHLEEELIEEKAFLIRRYEKQAYDEAKKQANFVLAQATTRYAGDFATERLVNVINLPNDELKGRIIGKEGRNIKTLETISGVDVIVDDTPGSIILSSFNLYRRAIATKTIEKLVEDGRIQPSRIEEVYERVKDEMDEQMRQDGENIVLDMELGYMHPELKFLLGKMRYRASFGQNALGHSIEVANLAAIIAGELGGDEKLARRAGILHDIGKALTQELGGSHVDLGVEVCTCYKEHPVVINAIKAHHGYEEIQSIECAAVCAADTLSAARPGARREALENFLKRMQDIERIAMDKIGVKQAYAINAGREVRVIARADLVSDGQSVILAREIAKEIESTLQYPGEIKVSVIRETRAVEFAR.

Residues Val3 to Ile23 form a helical membrane-spanning segment. A KH domain is found at Leu213–Asp279. Residues Ala339–Ala432 form the HD domain.

This sequence belongs to the RNase Y family.

Its subcellular location is the cell membrane. Its function is as follows. Endoribonuclease that initiates mRNA decay. In Helicobacter hepaticus (strain ATCC 51449 / 3B1), this protein is Ribonuclease Y.